A 72-amino-acid chain; its full sequence is Translation initiation factor IF-1 (72 aa).

Residues 1–72 form the S1-like domain; the sequence is MTKEENIEMQ…SKGRIIFRSR (72 aa).

This sequence belongs to the IF-1 family. As to quaternary structure, component of the 30S ribosomal translation pre-initiation complex which assembles on the 30S ribosome in the order IF-2 and IF-3, IF-1 and N-formylmethionyl-tRNA(fMet); mRNA recruitment can occur at any time during PIC assembly.

The protein resides in the cytoplasm. One of the essential components for the initiation of protein synthesis. Stabilizes the binding of IF-2 and IF-3 on the 30S subunit to which N-formylmethionyl-tRNA(fMet) subsequently binds. Helps modulate mRNA selection, yielding the 30S pre-initiation complex (PIC). Upon addition of the 50S ribosomal subunit IF-1, IF-2 and IF-3 are released leaving the mature 70S translation initiation complex. In Wigglesworthia glossinidia brevipalpis, this protein is Translation initiation factor IF-1.